Here is a 353-residue protein sequence, read N- to C-terminus: Quinolinate synthase (353 aa).

Residues His47 and Ser68 each coordinate iminosuccinate. Cys113 is a [4Fe-4S] cluster binding site. Residues 139-141 (YAN) and Ser156 contribute to the iminosuccinate site. Cys200 contributes to the [4Fe-4S] cluster binding site. Residues 226-228 (HPE) and Thr243 contribute to the iminosuccinate site. Cys297 contributes to the [4Fe-4S] cluster binding site.

This sequence belongs to the quinolinate synthase family. Type 1 subfamily. The cofactor is [4Fe-4S] cluster.

It is found in the cytoplasm. It carries out the reaction iminosuccinate + dihydroxyacetone phosphate = quinolinate + phosphate + 2 H2O + H(+). The protein operates within cofactor biosynthesis; NAD(+) biosynthesis; quinolinate from iminoaspartate: step 1/1. In terms of biological role, catalyzes the condensation of iminoaspartate with dihydroxyacetone phosphate to form quinolinate. In Yersinia pestis bv. Antiqua (strain Nepal516), this protein is Quinolinate synthase.